Reading from the N-terminus, the 2696-residue chain is Histone-lysine N-methyltransferase, H3 lysine-36 specific (2696 aa).

The residue at position 117 (S117) is a Phosphoserine. 2 disordered regions span residues 207–252 and 281–311; these read MGSE…EKAA and DPDS…PFCQ. Residues 236-248 show a composition bias toward basic and acidic residues; it reads QKNKQRNEVDGSN. Polar residues-rich tracts occupy residues 281–290 and 297–306; these read DPDSSTSTLG and GTSSSSTSQE. The PWWP 1 domain maps to 323–388; it reads VGDLIWAKFK…AGKAIVMFEG (66 aa). Phosphoserine is present on residues S483 and S486. Residues 487 to 514 are disordered; that stretch reads ADEKEKPCAKSRARKSSDNPKRTSVKKG. A Phosphoserine modification is found at S766. Residues 872–891 are disordered; that stretch reads LGEDVSDSGTSKPSKPLLFS. Residue K906 forms a Glycyl lysine isopeptide (Lys-Gly) (interchain with G-Cter in SUMO2) linkage. 7 disordered regions span residues 936–1035, 1067–1093, 1112–1134, 1243–1272, 1294–1344, 1382–1428, and 1480–1534; these read YRSP…DAFS, VLQG…PLQI, SKVK…NGKG, SIGD…SEKK, PKKK…EPPV, SPRP…KKGD, and KMQC…MQGE. Residues 948–961 are compositionally biased toward low complexity; that stretch reads SPVGVSKVLVSGGS. Positions 971-982 are enriched in polar residues; sequence GTQNSANPSPSG. Basic and acidic residues-rich tracts occupy residues 1000–1017, 1070–1090, and 1112–1124; these read SDKR…DCVT, GDRE…KEDP, and SKVK…KISE. Basic and acidic residues predominate over residues 1300–1314; that stretch reads KVQEQVHKVSSRCEE. The span at 1323–1337 shows a compositional bias: polar residues; the sequence is SSAQNKQVDENSLIS. A Glycyl lysine isopeptide (Lys-Gly) (interchain with G-Cter in SUMO2) cross-link involves residue K1339. The residue at position 1510 (S1510) is a Phosphoserine. A compositionally biased stretch (basic and acidic residues) spans 1513–1523; it reads ETVEEGVEHDP. 3 consecutive PHD-type zinc fingers follow at residues 1543 to 1589, 1590 to 1646, and 1707 to 1751; these read ENVC…CRTG, IHTC…CHAA, and VSWC…CKAG. The 63-residue stretch at 1756 to 1818 folds into the PWWP 2 domain; the sequence is YREIVWVKVG…QARVFPYMEG (63 aa). Residues 1890-1940 form the AWS domain; the sequence is SEIPRCNCKATDENPCGIDSECINRMLLYECHPTVCPAGGRCQNQCFSKRQ. In terms of domain architecture, SET spans 1942 to 2059; the sequence is PEVEIFRTLQ…AGTELTFNYN (118 aa). S-adenosyl-L-methionine is bound by residues 1952 to 1954, 1994 to 1997, 2020 to 2021, N2065, and K2071; these read RGW, TNFY, and NH. An inhibits enzyme activity in the absence of bound histone region spans residues 2060–2066; sequence LECLGNG. The Post-SET domain maps to 2066–2082; it reads GKTVCKCGAPNCSGFLG. Positions 2091–2111 are disordered; sequence ATEEKSKKFKKKQQGKRRTQG. Basic residues predominate over residues 2097–2108; that stretch reads KKFKKKQQGKRR. The PHD-type 4; atypical zinc finger occupies 2118–2165; that stretch reads EDECFSCGDAGQLVSCKKPGCPKVYHADCLNLTKRPAGKWECPWHQCD. A disordered region spans residues 2213 to 2422; it reads LEPGEIREYV…SLSQRLPPPE (210 aa). Residues 2222–2232 are compositionally biased toward pro residues; it reads VPPPVPLPPGP. Residues 2281–2298 are compositionally biased toward basic and acidic residues; the sequence is RPLERTDSRPQPLDKVRD. Residues 2303 to 2314 are compositionally biased toward polar residues; it reads GTKSQSLVSSQR. Positions 2330-2348 are enriched in low complexity; that stretch reads SDKPSPVTSPSSSPSVRSQ. Position 2369 is a phosphoserine (S2369). 2 stretches are compositionally biased toward polar residues: residues 2371–2381 and 2394–2404; these read RPQSLEKTSVP and ITSSPKPQTSD. T2462 is subject to Phosphothreonine. Disordered regions lie at residues 2464–2499, 2553–2575, 2595–2616, and 2665–2696; these read RQKE…GLGH, TQAS…QSPG, KSGQ…EEKK, and LGRG…SEQK. S2471 is modified (phosphoserine). K2616 is covalently cross-linked (Glycyl lysine isopeptide (Lys-Gly) (interchain with G-Cter in SUMO2)). Residues 2674–2686 show a composition bias toward polar residues; it reads EQNTLPALNQAPS.

The protein belongs to the class V-like SAM-binding methyltransferase superfamily. Interacts with the ligand-binding domains of RARA and THRA in the absence of ligand; in the presence of ligand the interaction is severely disrupted but some binding still occurs. Interacts with the ligand-binding domains of RXRA and ESRRA only in the presence of ligand. Interacts with ZNF496. Interacts with AR DNA- and ligand-binding domains. As to expression, expressed in the fetal/adult brain, kidney, skeletal muscle, spleen, and the thymus, and faintly in the lung.

The protein localises to the nucleus. It localises to the chromosome. It carries out the reaction L-lysyl(36)-[histone H3] + 2 S-adenosyl-L-methionine = N(6),N(6)-dimethyl-L-lysyl(36)-[histone H3] + 2 S-adenosyl-L-homocysteine + 2 H(+). Histone methyltransferase that dimethylates Lys-36 of histone H3 (H3K36me2). Transcriptional intermediary factor capable of both negatively or positively influencing transcription, depending on the cellular context. This is Histone-lysine N-methyltransferase, H3 lysine-36 specific (NSD1) from Homo sapiens (Human).